The primary structure comprises 843 residues: Phosphatidylinositol-glycan-specific phospholipase D (843 aa).

Positions 1 to 23 are cleaved as a signal peptide; it reads MSVGRLWSGLLLLLLFFCSRSSS. Residues Asn94, Asn271, Asn292, Asn308, and Asn322 are each glycosylated (N-linked (GlcNAc...) asparagine). FG-GAP repeat units follow at residues 368 to 429, 435 to 498, 500 to 560, 564 to 625, 635 to 695, 707 to 773, and 791 to 843; these read SPSA…GLPP, DKEA…GRLS, SPNI…RNDK, TLDE…SLGR, QREI…GATR, ALFS…TLGD, and QYVL…FSSD. N-linked (GlcNAc...) asparagine glycans are attached at residues Asn483, Asn502, Asn592, Asn605, and Asn661.

It belongs to the GPLD1 family. As to quaternary structure, monomer. Post-translationally, glycosylated.

It is found in the secreted. It carries out the reaction a 6-(alpha-D-glucosaminyl)-1-(1,2-diacyl-sn-glycero-3-phospho)-1D-myo-inositol + H2O = 6-(alpha-D-glucosaminyl)-1D-myo-inositol + a 1,2-diacyl-sn-glycero-3-phosphate + H(+). Its function is as follows. This protein hydrolyzes the inositol phosphate linkage in proteins anchored by phosphatidylinositol glycans (GPI-anchor) thus releasing these proteins from the membrane. This Rattus norvegicus (Rat) protein is Phosphatidylinositol-glycan-specific phospholipase D (Gpld1).